Consider the following 217-residue polypeptide: Large ribosomal subunit protein bL25 (217 aa).

Residues 178–217 form a disordered region; that stretch reads VVAPTEEPTEEEIEAMEGEQQTEEPEVVGESKEDEEKTEE. Residues 184-205 show a composition bias toward acidic residues; sequence EPTEEEIEAMEGEQQTEEPEVV. Basic and acidic residues predominate over residues 206–217; sequence GESKEDEEKTEE.

Belongs to the bacterial ribosomal protein bL25 family. CTC subfamily. As to quaternary structure, part of the 50S ribosomal subunit; part of the 5S rRNA/L5/L18/L25 subcomplex. Contacts the 5S rRNA. Binds to the 5S rRNA independently of L5 and L18.

In terms of biological role, this is one of the proteins that binds to the 5S RNA in the ribosome where it forms part of the central protuberance. The chain is Large ribosomal subunit protein bL25 from Staphylococcus aureus (strain USA300).